The following is a 371-amino-acid chain: Glycosyltransferase 8 domain-containing protein 1 (371 aa).

At 1–7 the chain is on the cytoplasmic side; the sequence is MSFRKVN. A helical; Signal-anchor for type II membrane protein membrane pass occupies residues 8–28; that stretch reads IIILVLAVALFLLVLHHNFLS. At 29 to 371 the chain is on the lumenal side; sequence LSSLLRNEVT…RRYTEISNIK (343 aa). Residues asparagine 249 and asparagine 257 are each glycosylated (N-linked (GlcNAc...) asparagine).

The protein belongs to the glycosyltransferase 8 family.

The protein resides in the membrane. This chain is Glycosyltransferase 8 domain-containing protein 1 (GLT8D1), found in Homo sapiens (Human).